A 414-amino-acid chain; its full sequence is Histidine--tRNA ligase (414 aa).

Belongs to the class-II aminoacyl-tRNA synthetase family. In terms of assembly, homodimer.

It is found in the cytoplasm. It catalyses the reaction tRNA(His) + L-histidine + ATP = L-histidyl-tRNA(His) + AMP + diphosphate + H(+). The sequence is that of Histidine--tRNA ligase from Mycoplasma mycoides subsp. mycoides SC (strain CCUG 32753 / NCTC 10114 / PG1).